The primary structure comprises 296 residues: Ribosomal RNA small subunit methyltransferase A (296 aa).

S-adenosyl-L-methionine contacts are provided by asparagine 32, leucine 34, glycine 59, glutamate 80, aspartate 105, and asparagine 130.

This sequence belongs to the class I-like SAM-binding methyltransferase superfamily. rRNA adenine N(6)-methyltransferase family. RsmA subfamily.

The protein localises to the cytoplasm. The enzyme catalyses adenosine(1518)/adenosine(1519) in 16S rRNA + 4 S-adenosyl-L-methionine = N(6)-dimethyladenosine(1518)/N(6)-dimethyladenosine(1519) in 16S rRNA + 4 S-adenosyl-L-homocysteine + 4 H(+). Its function is as follows. Specifically dimethylates two adjacent adenosines (A1518 and A1519) in the loop of a conserved hairpin near the 3'-end of 16S rRNA in the 30S particle. May play a critical role in biogenesis of 30S subunits. This Lactiplantibacillus plantarum (strain ATCC BAA-793 / NCIMB 8826 / WCFS1) (Lactobacillus plantarum) protein is Ribosomal RNA small subunit methyltransferase A.